A 264-amino-acid chain; its full sequence is Probable pectate lyase D (264 aa).

A signal peptide spans 1–17 (MFFKQLAVLSFATSALA). Asn60 is a glycosylation site (N-linked (GlcNAc...) asparagine). The segment at 234 to 264 (YEGTDNNDEEPQEISTGPSNACQYTDPLPSC) is disordered. The span at 235 to 245 (EGTDNNDEEPQ) shows a compositional bias: acidic residues. The span at 246 to 256 (EISTGPSNACQ) shows a compositional bias: polar residues.

It belongs to the polysaccharide lyase 3 family. It depends on Ca(2+) as a cofactor.

It localises to the secreted. It carries out the reaction Eliminative cleavage of (1-&gt;4)-alpha-D-galacturonan to give oligosaccharides with 4-deoxy-alpha-D-galact-4-enuronosyl groups at their non-reducing ends.. Pectinolytic enzyme consist of four classes of enzymes: pectin lyase, polygalacturonase, pectin methylesterase and rhamnogalacturonase. Among pectinolytic enzymes, pectin lyase is the most important in depolymerization of pectin, since it cleaves internal glycosidic bonds of highly methylated pectins. Favors pectate, the anion, over pectin, the methyl ester. This Emericella nidulans (strain FGSC A4 / ATCC 38163 / CBS 112.46 / NRRL 194 / M139) (Aspergillus nidulans) protein is Probable pectate lyase D (plyD).